Consider the following 249-residue polypeptide: Segregation and condensation protein A (249 aa).

It belongs to the ScpA family. As to quaternary structure, component of a cohesin-like complex composed of ScpA, ScpB and the Smc homodimer, in which ScpA and ScpB bind to the head domain of Smc. The presence of the three proteins is required for the association of the complex with DNA.

It localises to the cytoplasm. Its function is as follows. Participates in chromosomal partition during cell division. May act via the formation of a condensin-like complex containing Smc and ScpB that pull DNA away from mid-cell into both cell halves. This Listeria monocytogenes serotype 4a (strain HCC23) protein is Segregation and condensation protein A.